We begin with the raw amino-acid sequence, 870 residues long: DNA polymerase kappa (870 aa).

The region spanning 103–358 (IVHIDMDAFY…LPIRKVSGIG (256 aa)) is the UmuC domain. Residues aspartate 107, aspartate 198, and glutamate 199 each coordinate Mg(2+). UBZ4-type zinc fingers lie at residues 621–651 (ILTCPVCFRAQGCISLEALNKHVDECLDGPS) and 776–806 (ALVCPVCNVEQKTSDLTLFNVHVDVCLNKSF). Residues cysteine 624, cysteine 627, histidine 642, cysteine 646, cysteine 779, cysteine 782, histidine 797, and cysteine 801 each contribute to the Zn(2+) site. The segment at 816 to 858 (NPVNQPKESSRSTGSSSGVQKAVTRTKRPGLMTKYSTSKKIKP) is disordered.

Belongs to the DNA polymerase type-Y family. Interacts with REV1. Interacts with PCNA. Requires Mg(2+) as cofactor. Mn(2+) is required as a cofactor. As to expression, detected at low levels in testis, spleen, prostate and ovary. Detected at very low levels in kidney, colon, brain, heart, liver, lung, placenta, pancreas and peripheral blood leukocytes.

It localises to the nucleus. The enzyme catalyses DNA(n) + a 2'-deoxyribonucleoside 5'-triphosphate = DNA(n+1) + diphosphate. DNA polymerase specifically involved in DNA repair. Plays an important role in translesion synthesis, where the normal high-fidelity DNA polymerases cannot proceed and DNA synthesis stalls. Depending on the context, it inserts the correct base, but causes frequent base transitions, transversions and frameshifts. Lacks 3'-5' proofreading exonuclease activity. Forms a Schiff base with 5'-deoxyribose phosphate at abasic sites, but does not have lyase activity. This Homo sapiens (Human) protein is DNA polymerase kappa (POLK).